The primary structure comprises 553 residues: Putative transport protein CKO_00031 (553 aa).

5 consecutive transmembrane segments (helical) span residues 4-24, 28-48, 65-85, 95-115, and 158-178; these read IALT…IGNI, GVGF…HFVD, FGLI…FFAS, LFAI…HKIF, and MSYA…MWLM. 2 consecutive RCK C-terminal domains span residues 192–276 and 279–361; these read QHED…VIGQ and DTSL…VVGN. Helical transmembrane passes span 371–391, 393–413, 437–457, 464–484, 493–513, and 533–553; these read MLPV…PLFV, GFPV…ALIL, LGIV…FIDT, LSWI…VGLL, YLTL…LAFA, and LVMF…WGLG.

It belongs to the AAE transporter (TC 2.A.81) family. YidE subfamily.

The protein resides in the cell membrane. The sequence is that of Putative transport protein CKO_00031 from Citrobacter koseri (strain ATCC BAA-895 / CDC 4225-83 / SGSC4696).